Consider the following 122-residue polypeptide: Small ribosomal subunit protein bS6 (122 aa).

Residues 95–122 (AETAPSPMMKEVQREEAKKAAAQSEQAA) form a disordered region.

It belongs to the bacterial ribosomal protein bS6 family.

Binds together with bS18 to 16S ribosomal RNA. The polypeptide is Small ribosomal subunit protein bS6 (Ralstonia nicotianae (strain ATCC BAA-1114 / GMI1000) (Ralstonia solanacearum)).